A 1183-amino-acid chain; its full sequence is Translation initiation factor IF-2 (1183 aa).

Disordered regions lie at residues 55 to 512 (KSKT…KVHI) and 538 to 574 (ASLA…RQRR). The span at 83-99 (TQKDQKTEPKKKNHDQT) shows a compositional bias: basic and acidic residues. Composition is skewed to polar residues over residues 100-143 (ELSQ…QITA) and 165-177 (KPLT…IPQS). Basic and acidic residues predominate over residues 220-229 (PKIDIQDKKP). Over residues 231-252 (QPNNQKAKTRINQGEISPQKVG) the composition is skewed to polar residues. Residues 253–267 (QGNIQKIKSQNKQNQ) show a composition bias toward low complexity. Over residues 288–304 (IRREKPVNKPHTNEVRN) the composition is skewed to basic and acidic residues. Polar residues-rich tracts occupy residues 324-349 (QGLS…NRQG) and 357-367 (NRTTQGQNRPG). The span at 485-499 (GRPDWDDSAKLDALR) shows a compositional bias: basic and acidic residues. Basic residues-rich tracts occupy residues 544–553 (SKPKVGKRNN) and 560–574 (LKKR…RQRR). A tr-type G domain is found at 675–847 (RRPPVVTVMG…VLLVTEVEDL (173 aa)). Positions 684-691 (GHVDHGKT) are G1. 684 to 691 (GHVDHGKT) lines the GTP pocket. The tract at residues 709–713 (GITQH) is G2. The tract at residues 734-737 (DTPG) is G3. GTP is bound by residues 734-738 (DTPGH) and 788-791 (NKID). Positions 788-791 (NKID) are G4. The interval 824-826 (SAI) is G5.

Belongs to the TRAFAC class translation factor GTPase superfamily. Classic translation factor GTPase family. IF-2 subfamily.

The protein resides in the cytoplasm. In terms of biological role, one of the essential components for the initiation of protein synthesis. Protects formylmethionyl-tRNA from spontaneous hydrolysis and promotes its binding to the 30S ribosomal subunits. Also involved in the hydrolysis of GTP during the formation of the 70S ribosomal complex. This is Translation initiation factor IF-2 from Prochlorococcus marinus (strain NATL1A).